Reading from the N-terminus, the 294-residue chain is NADH-cytochrome b5 reductase 2 (294 aa).

The helical transmembrane segment at 11–27 (VLLPVVAAATSIGLVYH) threads the bilayer. The FAD-binding FR-type domain maps to 45–149 (DEWIDLKLKK…KGPIVKWKWE (105 aa)). 152 to 187 (QFQSIALIGGGTGITPLYQLLHEITKNPEDKTKVKL) is a binding site for FAD.

Belongs to the flavoprotein pyridine nucleotide cytochrome reductase family. It depends on FAD as a cofactor.

Its subcellular location is the mitochondrion outer membrane. The catalysed reaction is 2 Fe(III)-[cytochrome b5] + NADH = 2 Fe(II)-[cytochrome b5] + NAD(+) + H(+). Functionally, may mediate the reduction of outer membrane cytochrome b5. This is NADH-cytochrome b5 reductase 2 (MCR1) from Meyerozyma guilliermondii (strain ATCC 6260 / CBS 566 / DSM 6381 / JCM 1539 / NBRC 10279 / NRRL Y-324) (Yeast).